Here is a 413-residue protein sequence, read N- to C-terminus: Wilms tumor protein homolog (413 aa).

Glycyl lysine isopeptide (Lys-Gly) (interchain with G-Cter in SUMO) cross-links involve residues lysine 56 and lysine 159. Residues 218–226 (MTWNQMNLG) carry the 9aaTAD motif. 4 C2H2-type zinc fingers span residues 290–314 (FMCAYPGCNKRYFKLSHLQMHSRKH), 320–344 (YQCDFKDCERRFSRSDQLKRHQRRH), 350–372 (FQCKTCQRKFSRSDHLKTHTRTH), and 378–402 (FSCRWPSCQKKFARSDELVRHHNMH). Important for interaction with target DNA stretches follow at residues 334–348 (SDQLKRHQRRHTGIK) and 360–368 (SRSDHLKTH).

This sequence belongs to the EGR C2H2-type zinc-finger protein family.

It localises to the nucleus. The protein localises to the cytoplasm. The protein resides in the nucleus speckle. Functionally, transcription factor required for development of the vascular component of the pronephric kidney, the glomus; may repress tubule-specific gene expression in the portion of the pronephros fated to form the glomus. Recognizes and binds to the DNA sequence 5'-GCG(T/G)GGGCG-3'. Inhibits Wnt-signaling during embryonic development. This Xenopus tropicalis (Western clawed frog) protein is Wilms tumor protein homolog (wt1).